The primary structure comprises 394 residues: Cell division protein FtsZ (394 aa).

GTP is bound by residues 21-25 (GGGNN), 108-110 (GTG), Glu-139, Arg-143, and Asp-187. The disordered stretch occupies residues 317 to 394 (DKPSSQGRKA…EERRSRRTRR (78 aa)). Low complexity-rich tracts occupy residues 328–346 (STGFGSSVNSSSNHQSGAS) and 353–364 (SAHTSHSQSSES). Over residues 365 to 388 (VNERSHTTKDDDIPSFIRNREERR) the composition is skewed to basic and acidic residues.

Belongs to the FtsZ family. Homodimer. Polymerizes to form a dynamic ring structure in a strictly GTP-dependent manner. Interacts directly with several other division proteins.

Its subcellular location is the cytoplasm. Functionally, essential cell division protein that forms a contractile ring structure (Z ring) at the future cell division site. The regulation of the ring assembly controls the timing and the location of cell division. One of the functions of the FtsZ ring is to recruit other cell division proteins to the septum to produce a new cell wall between the dividing cells. Binds GTP and shows GTPase activity. The protein is Cell division protein FtsZ of Staphylococcus epidermidis (strain ATCC 12228 / FDA PCI 1200).